Reading from the N-terminus, the 301-residue chain is L-threonate dehydrogenase (301 aa).

Residues 6 to 34 (YSVAVIGLGSMGMGAAVSCINAGLTTYGI) and T101 each bind NAD(+). Residue K177 is part of the active site. K245 serves as a coordination point for NAD(+).

It belongs to the HIBADH-related family. L-threonate dehydrogenase subfamily.

The catalysed reaction is L-threonate + NAD(+) = 2-dehydro-L-erythronate + NADH + H(+). Functionally, catalyzes oxidation of L-threonate to 2-oxo-tetronate. Can use either NAD(+) or NADP(+) as cosubstrate, with a preference for NAD(+). The polypeptide is L-threonate dehydrogenase (Haemophilus influenzae (strain ATCC 51907 / DSM 11121 / KW20 / Rd)).